The sequence spans 88 residues: DNA-directed RNA polymerase subunit omega (88 aa).

It belongs to the RNA polymerase subunit omega family. In terms of assembly, the RNAP catalytic core consists of 2 alpha, 1 beta, 1 beta' and 1 omega subunit. When a sigma factor is associated with the core the holoenzyme is formed, which can initiate transcription.

The enzyme catalyses RNA(n) + a ribonucleoside 5'-triphosphate = RNA(n+1) + diphosphate. Promotes RNA polymerase assembly. Latches the N- and C-terminal regions of the beta' subunit thereby facilitating its interaction with the beta and alpha subunits. The protein is DNA-directed RNA polymerase subunit omega of Pseudomonas aeruginosa (strain LESB58).